The sequence spans 426 residues: uncharacterized protein (426 aa).

Positions 1-23 (MKKFILFLIILLFSIYFLNVSSA) are cleaved as a signal peptide.

This is an uncharacterized protein from Methanocaldococcus jannaschii (strain ATCC 43067 / DSM 2661 / JAL-1 / JCM 10045 / NBRC 100440) (Methanococcus jannaschii).